A 130-amino-acid chain; its full sequence is MPNNYRLAKVSSLLKKEITLILQNDLENDLIRDHFVNISKIDLSGDLQHCKIYITSTAEEKVRKEIVENLNTAKSSIRHSLGKRIEMRRVPEIIFKDDVVLDKGLSVLKLLDELKNKNQNNNVEEKDAKS.

The protein belongs to the RbfA family. Monomer. Binds 30S ribosomal subunits, but not 50S ribosomal subunits or 70S ribosomes.

It is found in the cytoplasm. In terms of biological role, one of several proteins that assist in the late maturation steps of the functional core of the 30S ribosomal subunit. Associates with free 30S ribosomal subunits (but not with 30S subunits that are part of 70S ribosomes or polysomes). Required for efficient processing of 16S rRNA. May interact with the 5'-terminal helix region of 16S rRNA. The sequence is that of Ribosome-binding factor A from Prochlorococcus marinus (strain MIT 9301).